A 271-amino-acid chain; its full sequence is Formamidopyrimidine-DNA glycosylase (271 aa).

P2 acts as the Schiff-base intermediate with DNA in catalysis. The active-site Proton donor is E3. K58 functions as the Proton donor; for beta-elimination activity in the catalytic mechanism. DNA is bound by residues H91, R110, and R152. The FPG-type zinc-finger motif lies at 237–271; the sequence is WVYGRAGQSCRQCGELVSKTRQGQRSTFFCARCQH. R261 serves as the catalytic Proton donor; for delta-elimination activity.

It belongs to the FPG family. As to quaternary structure, monomer. The cofactor is Zn(2+).

It catalyses the reaction Hydrolysis of DNA containing ring-opened 7-methylguanine residues, releasing 2,6-diamino-4-hydroxy-5-(N-methyl)formamidopyrimidine.. The catalysed reaction is 2'-deoxyribonucleotide-(2'-deoxyribose 5'-phosphate)-2'-deoxyribonucleotide-DNA = a 3'-end 2'-deoxyribonucleotide-(2,3-dehydro-2,3-deoxyribose 5'-phosphate)-DNA + a 5'-end 5'-phospho-2'-deoxyribonucleoside-DNA + H(+). Functionally, involved in base excision repair of DNA damaged by oxidation or by mutagenic agents. Acts as a DNA glycosylase that recognizes and removes damaged bases. Has a preference for oxidized purines, such as 7,8-dihydro-8-oxoguanine (8-oxoG). Has AP (apurinic/apyrimidinic) lyase activity and introduces nicks in the DNA strand. Cleaves the DNA backbone by beta-delta elimination to generate a single-strand break at the site of the removed base with both 3'- and 5'-phosphates. The sequence is that of Formamidopyrimidine-DNA glycosylase from Nitrosomonas europaea (strain ATCC 19718 / CIP 103999 / KCTC 2705 / NBRC 14298).